Consider the following 217-residue polypeptide: Translation initiation factor IF-3 (217 aa).

Residues 179-217 (PRKTPLVKKEEKEAAPTKAVRTIPAPPRPTAAKVAAQQA) form a disordered region.

It belongs to the IF-3 family. In terms of assembly, monomer.

The protein resides in the cytoplasm. IF-3 binds to the 30S ribosomal subunit and shifts the equilibrium between 70S ribosomes and their 50S and 30S subunits in favor of the free subunits, thus enhancing the availability of 30S subunits on which protein synthesis initiation begins. In Parasynechococcus marenigrum (strain WH8102), this protein is Translation initiation factor IF-3.